The chain runs to 1752 residues: Serine protease/ABC transporter B family protein tagA (1752 aa).

The first 24 residues, 1–24 (MNKKLFIFGLSLFLFLFIFNLSLS), serve as a signal peptide directing secretion. Residue N20 is glycosylated (N-linked (GlcNAc...) asparagine). Residues 280–696 (HYSIQSGSAS…FGNIQLSKLI (417 aa)) form the Peptidase S8 domain. Catalysis depends on charge relay system residues D312 and H352. N-linked (GlcNAc...) asparagine glycans are attached at residues N400 and N557. Catalysis depends on S625, which acts as the Charge relay system. 3 N-linked (GlcNAc...) asparagine glycosylation sites follow: N653, N785, and N823. A helical membrane pass occupies residues 909-929 (IVLLGIFGIIIVGAVIFVLVC). The interval 946-1032 (DKGGDGNSIR…QNNSPQYDED (87 aa)) is disordered. A compositionally biased stretch (low complexity) spans 962 to 994 (NNNNNNNNNNNNNNNNNNNNNNNNNNNNNNNNN). N993 is a glycosylation site (N-linked (GlcNAc...) asparagine). Over residues 995–1004 (SNGKQSNIEL) the composition is skewed to polar residues. A compositionally biased stretch (low complexity) spans 1013-1028 (GTPNGDDQQQQNNSPQ). 6 consecutive transmembrane segments (helical) span residues 1058 to 1078 (ILGL…AVPL), 1102 to 1122 (FALI…LLAL), 1174 to 1194 (IPHM…LFII), 1200 to 1220 (LVVL…GGYI), 1285 to 1305 (TSGI…SSLV), and 1315 to 1335 (LIAF…VASL). The region spanning 1059 to 1341 (LGLALFLSFI…VASLYTTYKS (283 aa)) is the ABC transmembrane type-1 domain. Positions 1374-1610 (IQFNKVSFAY…KGMFYDFVQI (237 aa)) constitute an ABC transporter domain. 1409-1416 (GPSGGGKS) contacts ATP. The disordered stretch occupies residues 1621–1686 (IQLPSNSRNT…SRSPPPMWRQ (66 aa)). Basic and acidic residues predominate over residues 1631–1642 (RNADKLRNRSET). 3 N-linked (GlcNAc...) asparagine glycosylation sites follow: N1638, N1670, and N1694.

It in the C-terminal section; belongs to the ABC transporter superfamily. ABCB family. Multidrug resistance exporter (TC 3.A.1.201) subfamily. The protein in the N-terminal section; belongs to the peptidase S8 family.

It localises to the membrane. Functionally, required for a general cell fate determination at the onset of development. Required for the specification of an initial population of prespore cells in which tagA is expressed. Required for normal SDF-2 signaling during spore encapsulation. This is Serine protease/ABC transporter B family protein tagA (tagA) from Dictyostelium discoideum (Social amoeba).